A 102-amino-acid chain; its full sequence is Integration host factor subunit alpha (102 aa).

This sequence belongs to the bacterial histone-like protein family. Heterodimer of an alpha and a beta chain.

This protein is one of the two subunits of integration host factor, a specific DNA-binding protein that functions in genetic recombination as well as in transcriptional and translational control. In Albidiferax ferrireducens (strain ATCC BAA-621 / DSM 15236 / T118) (Rhodoferax ferrireducens), this protein is Integration host factor subunit alpha.